We begin with the raw amino-acid sequence, 506 residues long: MSFSVEVLAGIAIELQRGIGHQDRFQRLITTLRQVLACDASALLRYESRQFIPLAIDGLAQDVLGRRFTLEGHPRLEAIARAGDVVRFPADSDLPDPYDGLIPGQESLKVHACVGLPLFAGQNLIGALTLDAMTPEQFEVFSDEELRLVAALAAGALSNALLIEQLESQNMLPGSSGVFEPIKETHMIGLSPAMTQLKKEIEIVAGSDLNVLIGGETGTGKELVAKAIHQGSPRAVNPLVYLNCAALPESVAESELFGHVKGAFTGAISNRSGKFEMADNGTLFLDEIGELSLALQAKLLRVLQYGDIQRVGDDRSLRVDVRVLAATNRDLREEVLAGRFRADLFHRLSVFPLFVPPLRERGDDVVLLAGYFCEQCRLRLGLSRVVLSPGARRHLLNYGWPGNVRELEHAIHRAVVLARATRAGDEVILEAQHFALSEDVLPAPPAESFLALPTCRNLRESTENFQREMIRQALAQNNHNWAASARALETDVANLHRLAKRLGLKD.

Residue Asp-57 is modified to 4-aspartylphosphate. Positions 187–416 (MIGLSPAMTQ…LEHAIHRAVV (230 aa)) constitute a Sigma-54 factor interaction domain. Residues 215–222 (GETGTGKE) and 278–287 (ADNGTLFLDE) contribute to the ATP site. The segment at residues 481–500 (WAASARALETDVANLHRLAK) is a DNA-binding region (H-T-H motif).

Its pathway is nitrogen metabolism; nitric oxide reduction. Its function is as follows. Required for the expression of anaerobic nitric oxide (NO) reductase, acts as a transcriptional activator for at least the norVW operon. Activation also requires sigma-54. This is Anaerobic nitric oxide reductase transcription regulator NorR from Salmonella schwarzengrund (strain CVM19633).